The primary structure comprises 296 residues: Chelated iron transport system membrane protein YfeB (296 aa).

The region spanning 11–246 (LVVDNVTVTY…NLEMTFGGVL (236 aa)) is the ABC transporter domain. Residue 44–51 (GVNGSGKS) participates in ATP binding. The interval 276-296 (VFYGHTKNDPPAQSQSKEQNS) is disordered. A compositionally biased stretch (polar residues) spans 286–296 (PAQSQSKEQNS).

It belongs to the ABC transporter superfamily.

It localises to the cell inner membrane. In terms of biological role, part of an ATP-driven transport system YfeABCD for chelated iron. The chain is Chelated iron transport system membrane protein YfeB (yfeB) from Yersinia pestis.